The following is a 1032-amino-acid chain: UPF0182 protein sll1060 (1032 aa).

The next 9 membrane-spanning stretches (helical) occupy residues 27 to 49, 69 to 87, 144 to 166, 197 to 219, 226 to 248, 283 to 300, 321 to 339, 364 to 386, and 406 to 428; these read WVKG…RIYV, WQGS…FIVF, VLLP…YVFI, FSGM…IGVL, PGLV…FRLL, WWRG…LIIL, HISA…EHWL, LPVE…WLSV, and IIGL…LGGW.

The protein belongs to the UPF0182 family.

Its subcellular location is the cell membrane. This Synechocystis sp. (strain ATCC 27184 / PCC 6803 / Kazusa) protein is UPF0182 protein sll1060.